The primary structure comprises 107 residues: Prostate collagen triple helix protein (107 aa).

The segment at Pro47–Pro107 is disordered. Over residues Val81 to Ser100 the composition is skewed to low complexity.

As to expression, expressed in prostate and testis. Weakly or not expressed in other tissues. Overexpressed in prostate cancers.

The protein resides in the cytoplasm. May be involved in growth and survival of prostate cancer cells through the TAF-Ibeta pathway. This is Prostate collagen triple helix protein (PCOTH) from Homo sapiens (Human).